A 185-amino-acid polypeptide reads, in one-letter code: Hypoxanthine/guanine phosphoribosyltransferase (185 aa).

This sequence belongs to the purine/pyrimidine phosphoribosyltransferase family. Archaeal HPRT subfamily. In terms of assembly, homodimer.

The protein resides in the cytoplasm. It catalyses the reaction IMP + diphosphate = hypoxanthine + 5-phospho-alpha-D-ribose 1-diphosphate. The catalysed reaction is GMP + diphosphate = guanine + 5-phospho-alpha-D-ribose 1-diphosphate. The protein operates within purine metabolism; IMP biosynthesis via salvage pathway; IMP from hypoxanthine: step 1/1. Catalyzes a salvage reaction resulting in the formation of IMP that is energically less costly than de novo synthesis. The protein is Hypoxanthine/guanine phosphoribosyltransferase of Methanococcus maripaludis (strain C5 / ATCC BAA-1333).